The following is a 255-amino-acid chain: Small ribosomal subunit protein eS1 (255 aa).

Residues 1–18 (MAVGKNKRLSKGKKGLKK) are compositionally biased toward basic residues. The interval 1 to 28 (MAVGKNKRLSKGKKGLKKRTQDPFSRKD) is disordered. An N-acetylalanine; partial modification is found at Ala2. The segment covering 19–28 (RTQDPFSRKD) has biased composition (basic and acidic residues).

This sequence belongs to the eukaryotic ribosomal protein eS1 family. As to quaternary structure, component of the small ribosomal subunit. Mature ribosomes consist of a small (40S) and a large (60S) subunit. The 40S subunit contains about 33 different proteins and 1 molecule of RNA (18S). The 60S subunit contains about 49 different proteins and 3 molecules of RNA (25S, 5.8S and 5S).

It is found in the cytoplasm. The protein is Small ribosomal subunit protein eS1 of Ajellomyces capsulatus (strain NAm1 / WU24) (Darling's disease fungus).